A 515-amino-acid polypeptide reads, in one-letter code: Probable cytochrome P450 4p3 (515 aa).

The heme site is built by glutamate 322 and cysteine 461.

The protein belongs to the cytochrome P450 family. Heme serves as cofactor.

The protein localises to the endoplasmic reticulum membrane. It localises to the microsome membrane. May be involved in the metabolism of insect hormones and in the breakdown of synthetic insecticides. This is Probable cytochrome P450 4p3 (Cyp4p3) from Drosophila melanogaster (Fruit fly).